The chain runs to 310 residues: D-alanine--D-alanine ligase (310 aa).

The 199-residue stretch at 107 to 305 (KKVWQSAGLP…FSALVQSILA (199 aa)) folds into the ATP-grasp domain. Residue 134-189 (EQLHCQDFVIKPALEGSSVGVSRVKNQEQLAAAIPFAGGARAKIMAEPWIVGRELT) participates in ATP binding. Asp259, Glu272, and Asn274 together coordinate Mg(2+).

This sequence belongs to the D-alanine--D-alanine ligase family. Mg(2+) serves as cofactor. It depends on Mn(2+) as a cofactor.

The protein localises to the cytoplasm. It catalyses the reaction 2 D-alanine + ATP = D-alanyl-D-alanine + ADP + phosphate + H(+). It participates in cell wall biogenesis; peptidoglycan biosynthesis. In terms of biological role, cell wall formation. The sequence is that of D-alanine--D-alanine ligase from Dichelobacter nodosus (strain VCS1703A).